We begin with the raw amino-acid sequence, 322 residues long: Breast cancer metastasis-suppressor 1-like protein (322 aa).

Over residues 1 to 16 (MPVHSREKKESNHNDM) the composition is skewed to basic and acidic residues. Positions 1–56 (MPVHSREKKESNHNDMEVDYPENEGSSSEEDDSDSSSGSEEGDSSEMDDEDCERRR) are disordered. Residues 17 to 51 (EVDYPENEGSSSEEDDSDSSSGSEEGDSSEMDDED) show a composition bias toward acidic residues. Coiled-coil stretches lie at residues 50 to 99 (EDCE…QAQE) and 147 to 178 (EKLLLYDTVQSELEEKIRRLEEDRHSIDITSE).

It belongs to the BRMS1 family.

It is found in the nucleus. Its function is as follows. Involved in the histone deacetylase (HDAC1)-dependent transcriptional repression activity. The polypeptide is Breast cancer metastasis-suppressor 1-like protein (brms1l) (Xenopus laevis (African clawed frog)).